The following is a 174-amino-acid chain: RNA pyrophosphohydrolase (174 aa).

Residues 6–145 (GYRPNVGMII…KRRVYWQALQ (140 aa)) form the Nudix hydrolase domain. The Nudix box motif lies at 38–59 (GGIDYAETPEQAMFRELEEEVG).

Belongs to the Nudix hydrolase family. RppH subfamily. A divalent metal cation is required as a cofactor.

In terms of biological role, accelerates the degradation of transcripts by removing pyrophosphate from the 5'-end of triphosphorylated RNA, leading to a more labile monophosphorylated state that can stimulate subsequent ribonuclease cleavage. The sequence is that of RNA pyrophosphohydrolase from Acidithiobacillus ferrooxidans (strain ATCC 53993 / BNL-5-31) (Leptospirillum ferrooxidans (ATCC 53993)).